A 424-amino-acid chain; its full sequence is Histidine--tRNA ligase (424 aa).

This sequence belongs to the class-II aminoacyl-tRNA synthetase family. Homodimer.

The protein localises to the cytoplasm. The catalysed reaction is tRNA(His) + L-histidine + ATP = L-histidyl-tRNA(His) + AMP + diphosphate + H(+). This is Histidine--tRNA ligase (hisS) from Bacillus subtilis (strain 168).